The sequence spans 213 residues: Pyridoxine/pyridoxamine 5'-phosphate oxidase (213 aa).

FMN is bound by residues 57–62, 77–78, R83, K84, and Q106; these read RIVLLR and FT. Residue R62 coordinates substrate. Substrate is bound by residues Y124, R128, and S132. Residues 135–163 are disordered; it reads GARASDQSRPLPDRKTLQKRVEEEEARYP. An FMN-binding site is contributed by 141 to 142; it reads QS. The segment covering 145-163 has biased composition (basic and acidic residues); the sequence is LPDRKTLQKRVEEEEARYP. W186 is an FMN binding site. 192–194 provides a ligand contact to substrate; the sequence is RLH. An FMN-binding site is contributed by R196.

This sequence belongs to the pyridoxamine 5'-phosphate oxidase family. Homodimer. It depends on FMN as a cofactor.

It catalyses the reaction pyridoxamine 5'-phosphate + O2 + H2O = pyridoxal 5'-phosphate + H2O2 + NH4(+). The enzyme catalyses pyridoxine 5'-phosphate + O2 = pyridoxal 5'-phosphate + H2O2. Its pathway is cofactor metabolism; pyridoxal 5'-phosphate salvage; pyridoxal 5'-phosphate from pyridoxamine 5'-phosphate: step 1/1. It functions in the pathway cofactor metabolism; pyridoxal 5'-phosphate salvage; pyridoxal 5'-phosphate from pyridoxine 5'-phosphate: step 1/1. Its function is as follows. Catalyzes the oxidation of either pyridoxine 5'-phosphate (PNP) or pyridoxamine 5'-phosphate (PMP) into pyridoxal 5'-phosphate (PLP). This is Pyridoxine/pyridoxamine 5'-phosphate oxidase from Granulibacter bethesdensis (strain ATCC BAA-1260 / CGDNIH1).